Reading from the N-terminus, the 406-residue chain is MGPSAPLLLLFFLSWTGPLQGQQHHLVEYMERRLAALEERLAQCQDQSSRLAAELRDFKNKMLPLLEVAEKERETLRTEADSISGRVDRLEREVDYLETQNPALPCVELDEKVTGGPGAKGKGRRNEKYDMVTDCSYTVAQVRSMKILKRFGGSAGLWTKDPLGPAEKIYVLDGTQNDTAFVFPRLRDFTLAMAARKASRIRVPFPWVGTGQLVYGGFLYYARRPPGGPGGGGELENTLQLIKFHLANRTVVDSSVFPAESLIPPYGLTADTYIDLAADEEGLWAVYATRDDDRHLCLAKLDPQTLDTEQQWDTPCPRENAEAAFVICGTLYVVYNTRPASRARIQCSFDASGTLAPERAALSYFPRRYGAHASLRYNPRERQLYAWDDGYQIVYKLEMKKKEEEV.

An N-terminal signal peptide occupies residues 1 to 21; sequence MGPSAPLLLLFFLSWTGPLQG. Residues 25 to 101 adopt a coiled-coil conformation; it reads HLVEYMERRL…REVDYLETQN (77 aa). Residues 134–401 form the Olfactomedin-like domain; sequence DCSYTVAQVR…QIVYKLEMKK (268 aa). Cysteines 135 and 328 form a disulfide. Residues Asn-177 and Asn-248 are each glycosylated (N-linked (GlcNAc...) asparagine).

Belongs to the OLFML3 family.

The protein localises to the secreted. In terms of biological role, secreted scaffold protein that plays an essential role in dorsoventral patterning during early development. Stabilizes axial formation by restricting chordin (CHRD) activity on the dorsal side. Acts by facilitating the association between the tolloid proteases and their substrate chordin (CHRD), leading to enhance chordin (CHRD) degradation. May have matrix-related function involved in placental and embryonic development, or play a similar role in other physiological processes. The protein is Olfactomedin-like protein 3 (Olfml3) of Mus musculus (Mouse).